The following is a 541-amino-acid chain: Sialate O-acetylesterase (541 aa).

The signal sequence occupies residues 1 to 23 (MVSPGPVFGIVLLIIARVSRSAG). Residues N107, N138, N188, N293, N356, N427, N448, and N462 are each glycosylated (N-linked (GlcNAc...) asparagine).

Disulfide-linked heterodimer of a small subunit and a large subunit. The two subunits are derived from a single precursor by proteolytic cleavage. Post-translationally, the lysosomal isoform is glycosylated. Highly expressed in liver, testis, and kidney, whereas skeletal muscle, adipose tissue, and heart have lower levels. In terms of tissue distribution, highest expression in brain and ovary and lower levels in liver and thymus.

The protein resides in the lysosome. It is found in the cytoplasm. The enzyme catalyses N-acetyl-9-O-acetylneuraminate + H2O = N-acetylneuraminate + acetate + H(+). It carries out the reaction an Ac-O-9-sialoglycoconjugate + H2O = a sialoglycoconjugate + acetate + H(+). With respect to regulation, inhibited by diisopropyl fluorophosphate and diethyl-P-nitrophenyl phosphate. Catalyzes the removal of O-acetyl ester groups from position 9 of the free diacetylated sialate N-acetyl-9-O-acetylneuraminate (Neu5,9Ac2) in the cytosol and of the diacetylated sialate residues of sialylglycoconjugates in the lysosomes. Together with the sialate-O-acetyltransferase they regulate the balance of acetylated sialoglycoconjugates, key players in various processes such as cell-cell interactions, host-pathogen recognition, and tumor antigenicity. The protein is Sialate O-acetylesterase (Siae) of Mus musculus (Mouse).